The sequence spans 1332 residues: Xanthine dehydrogenase/oxidase (1332 aa).

Residues Asp-4–Ile-91 form the 2Fe-2S ferredoxin-type domain. [2Fe-2S] cluster-binding residues include Cys-43, Cys-48, Cys-51, Cys-73, Cys-113, Cys-116, Cys-148, and Cys-150. Residues Phe-229–Glu-414 form the FAD-binding PCMH-type domain. FAD-binding positions include Leu-257–Ile-264, Phe-337, Ser-347–Asn-351, Asp-360, Leu-404, and Lys-422. A disulfide bridge links Cys-535 with Cys-992. Positions 767 and 798 each coordinate Mo-molybdopterin. Glu-802 and Arg-880 together coordinate substrate. Arg-912 serves as a coordination point for Mo-molybdopterin. Substrate contacts are provided by Phe-914 and Thr-1010. Ala-1079 contacts Mo-molybdopterin. Glu-1261 serves as the catalytic Proton acceptor.

It belongs to the xanthine dehydrogenase family. As to quaternary structure, homodimer. Interacts with BTN1A1. [2Fe-2S] cluster is required as a cofactor. Requires FAD as cofactor. It depends on Mo-molybdopterin as a cofactor. In terms of processing, subject to partial proteolysis; this alters the enzyme from the dehydrogenase form (D) to the oxidase form (O). Post-translationally, contains sulfhydryl groups that are easily oxidized (in vitro); this alters the enzyme from the dehydrogenase form (D) to the oxidase form (O). In terms of tissue distribution, detected in milk (at protein level).

It localises to the cytoplasm. It is found in the peroxisome. The protein localises to the secreted. It catalyses the reaction xanthine + NAD(+) + H2O = urate + NADH + H(+). It carries out the reaction hypoxanthine + NAD(+) + H2O = xanthine + NADH + H(+). The catalysed reaction is xanthine + O2 + H2O = urate + H2O2. Its activity is regulated as follows. Can be converted from the dehydrogenase form (D) to the oxidase form (O) irreversibly by proteolysis or reversibly through the oxidation of sulfhydryl groups. Key enzyme in purine degradation. Catalyzes the oxidation of hypoxanthine to xanthine. Catalyzes the oxidation of xanthine to uric acid. Contributes to the generation of reactive oxygen species. The sequence is that of Xanthine dehydrogenase/oxidase (XDH) from Bos taurus (Bovine).